A 531-amino-acid chain; its full sequence is UDP-glucuronosyltransferase 1A6 (531 aa).

A signal peptide spans 1-26; it reads MACLLPAAQTLPAGFLFLVLWASVLG. Residues Asn-293 and Asn-431 are each glycosylated (N-linked (GlcNAc...) asparagine). A helical transmembrane segment spans residues 489–505; that stretch reads VIGFLLAIVLTVVFIVF.

The protein belongs to the UDP-glycosyltransferase family. As to expression, expressed in liver, kidney and at very low levels in colon.

It localises to the microsome. Its subcellular location is the endoplasmic reticulum membrane. The enzyme catalyses glucuronate acceptor + UDP-alpha-D-glucuronate = acceptor beta-D-glucuronoside + UDP + H(+). It catalyses the reaction (5Z,8Z,11Z,14Z)-eicosatetraenoate + UDP-alpha-D-glucuronate = O-[(5Z),(8Z),(11Z),(14Z)-eicosatetraenoyl]-beta-D-glucuronate + UDP. The catalysed reaction is 15-hydroxy-(5Z,8Z,11Z,13E)-eicosatetraenoate + UDP-alpha-D-glucuronate = 15-O-(beta-D-glucuronosyl)-(5Z,8Z,11Z,14Z)-eicosatetraenoate + UDP + H(+). It carries out the reaction (E)-ferulate + UDP-alpha-D-glucuronate = (E)-4-O-(beta-D-glucuronosyl)-ferulate + UDP + H(+). The enzyme catalyses (E)-ferulate + UDP-alpha-D-glucuronate = (E)-ferulic acid beta-D-glucuronate ester + UDP. UDP-glucuronosyltransferase (UGT) that catalyzes phase II biotransformation reactions in which lipophilic substrates are conjugated with glucuronic acid to facilitate their inactivation and excretion from the body. Essential for the elimination and detoxification of drugs, xenobiotics and endogenous compounds. Involved in the glucuronidation of arachidonic acid (AA) and AA-derived eicosanoids including 15-HETE and 20-HETE. Conjugates small planar phenolic molecules such as 4-nitrophenol, 1-naphthol, and 4-methylumbelliferone. The bulky phenol 4-hydroxybiphenyl, androgens and estrogens are not substrates. 2-hydroxybiphenyl is an excellent substrate. Involved in the glucuronidation of the phytochemical ferulic acid at the phenolic or the carboxylic acid group. The polypeptide is UDP-glucuronosyltransferase 1A6 (Mus musculus (Mouse)).